The following is a 206-amino-acid chain: MTKLSKRQLDILRFIKEEVKTKGYPPSVREIGEAVGLASSSTVHGHLARLETKGLIRRDPTKPRAIEVLDEEEVQIPKSQVVNVPVIGKVTAGIPITAVENIDEYFPLPDRMVPPGEHVFMLEIMGESMIDAGIFDKDYVIVKQQNTANNGEIVVAMTEDDEATVKRFYKEDNYVRLQPENPTMEPIILQNVSILGKVIGVFRTVH.

Residues 28–48 (VREIGEAVGLASSSTVHGHLA) constitute a DNA-binding region (H-T-H motif). Active-site for autocatalytic cleavage activity residues include Ser-128 and Lys-166.

Belongs to the peptidase S24 family. Homodimer.

The catalysed reaction is Hydrolysis of Ala-|-Gly bond in repressor LexA.. Its function is as follows. Represses a number of genes involved in the response to DNA damage (SOS response), including recA and lexA. In the presence of single-stranded DNA, RecA interacts with LexA causing an autocatalytic cleavage which disrupts the DNA-binding part of LexA, leading to derepression of the SOS regulon and eventually DNA repair. This is LexA repressor from Bacillus velezensis (strain DSM 23117 / BGSC 10A6 / LMG 26770 / FZB42) (Bacillus amyloliquefaciens subsp. plantarum).